An 81-amino-acid chain; its full sequence is MNPIISAASVIAAGLAVGLASIGPGVGQGTAAGQALEGIARQPEAEGKIRGTLLLSLAFMEALTIYGLVVALALLFANPFV.

Transmembrane regions (helical) follow at residues 3-23 (PIISAASVIAAGLAVGLASIG) and 57-77 (LAFMEALTIYGLVVALALLFA).

This sequence belongs to the ATPase C chain family. F-type ATPases have 2 components, F(1) - the catalytic core - and F(0) - the membrane proton channel. F(1) has five subunits: alpha(3), beta(3), gamma(1), delta(1), epsilon(1). F(0) has four main subunits: a(1), b(1), b'(1) and c(10-14). The alpha and beta chains form an alternating ring which encloses part of the gamma chain. F(1) is attached to F(0) by a central stalk formed by the gamma and epsilon chains, while a peripheral stalk is formed by the delta, b and b' chains.

It localises to the plastid. It is found in the chloroplast thylakoid membrane. Functionally, f(1)F(0) ATP synthase produces ATP from ADP in the presence of a proton or sodium gradient. F-type ATPases consist of two structural domains, F(1) containing the extramembraneous catalytic core and F(0) containing the membrane proton channel, linked together by a central stalk and a peripheral stalk. During catalysis, ATP synthesis in the catalytic domain of F(1) is coupled via a rotary mechanism of the central stalk subunits to proton translocation. Its function is as follows. Key component of the F(0) channel; it plays a direct role in translocation across the membrane. A homomeric c-ring of between 10-14 subunits forms the central stalk rotor element with the F(1) delta and epsilon subunits. The polypeptide is ATP synthase subunit c, chloroplastic (Welwitschia mirabilis (Tree tumbo)).